The following is a 114-amino-acid chain: Large ribosomal subunit protein uL22 (114 aa).

This sequence belongs to the universal ribosomal protein uL22 family. In terms of assembly, part of the 50S ribosomal subunit.

In terms of biological role, this protein binds specifically to 23S rRNA; its binding is stimulated by other ribosomal proteins, e.g. L4, L17, and L20. It is important during the early stages of 50S assembly. It makes multiple contacts with different domains of the 23S rRNA in the assembled 50S subunit and ribosome. The globular domain of the protein is located near the polypeptide exit tunnel on the outside of the subunit, while an extended beta-hairpin is found that lines the wall of the exit tunnel in the center of the 70S ribosome. This Streptococcus pyogenes serotype M6 (strain ATCC BAA-946 / MGAS10394) protein is Large ribosomal subunit protein uL22.